The chain runs to 302 residues: Sulfate adenylyltransferase subunit 2 (302 aa).

The interval 280–302 (RQGRLIDSDQSASMEQKKRQGYF) is disordered.

It belongs to the PAPS reductase family. CysD subfamily. As to quaternary structure, heterodimer composed of CysD, the smaller subunit, and CysN.

The enzyme catalyses sulfate + ATP + H(+) = adenosine 5'-phosphosulfate + diphosphate. Its pathway is sulfur metabolism; hydrogen sulfide biosynthesis; sulfite from sulfate: step 1/3. In terms of biological role, with CysN forms the ATP sulfurylase (ATPS) that catalyzes the adenylation of sulfate producing adenosine 5'-phosphosulfate (APS) and diphosphate, the first enzymatic step in sulfur assimilation pathway. APS synthesis involves the formation of a high-energy phosphoric-sulfuric acid anhydride bond driven by GTP hydrolysis by CysN coupled to ATP hydrolysis by CysD. The protein is Sulfate adenylyltransferase subunit 2 of Shewanella frigidimarina (strain NCIMB 400).